The following is a 256-amino-acid chain: GCN5-related N-acetyltransferase 10, chloroplastic (256 aa).

The N-terminal 41 residues, 1 to 41 (MGHLPQSLYSAAGPKFPYPGSSGLGVDQRKLTWSRFPVFLR), are a transit peptide targeting the chloroplast. Residues 106–256 (FMFFQAEVLS…RRVLMSKRFS (151 aa)) enclose the N-acetyltransferase domain. Residues 178–180 (LAV), 186–191 (RKKMAS), 217–219 (DAA), and Tyr224 each bind acetyl-CoA. Catalysis depends on Tyr224, which acts as the Proton donor.

The protein belongs to the acetyltransferase family. GNAT subfamily. As to quaternary structure, oligomer. Autoacetylated. In terms of tissue distribution, expressed in green tissues.

It is found in the plastid. The protein localises to the chloroplast. It carries out the reaction an N-terminal L-alpha-aminoacyl-[protein] + acetyl-CoA = N-terminal N(alpha)-acetyl-L-alpha-aminoacyl-[protein] + CoA + H(+). The catalysed reaction is L-lysyl-[protein] + acetyl-CoA = N(6)-acetyl-L-lysyl-[protein] + CoA + H(+). The enzyme catalyses N-terminal L-methionyl-[protein] + acetyl-CoA = N-terminal N(alpha)-acetyl-L-methionyl-[protein] + CoA + H(+). It catalyses the reaction N-terminal L-seryl-[protein] + acetyl-CoA = N-terminal N(alpha)-acetyl-L-seryl-[protein] + CoA + H(+). It carries out the reaction N-terminal L-valyl-[protein] + acetyl-CoA = N-terminal N(alpha)-acetyl-L-valyl-[protein] + CoA + H(+). The catalysed reaction is N-terminal L-threonyl-[protein] + acetyl-CoA = N-terminal N(alpha)-acetyl-L-threonyl-[protein] + CoA + H(+). The enzyme catalyses N-terminal L-alanyl-[protein] + acetyl-CoA = N-terminal N(alpha)-acetyl-L-alanyl-[protein] + CoA + H(+). It catalyses the reaction N-terminal glycyl-[protein] + acetyl-CoA = N-terminal N(alpha)-acetylglycyl-[protein] + CoA + H(+). In terms of biological role, protein acetyltransferase with dual specificity triggering both N-alpha-acetylation (NTA), with a preference for leucine, methionine, serine, valine and to a lower extent threonine and alanine as substrates (can also use glycine), and epsilon-lysine acetylation (KA) of several plastid proteins. This is GCN5-related N-acetyltransferase 10, chloroplastic from Arabidopsis thaliana (Mouse-ear cress).